The primary structure comprises 73 residues: Disintegrin trigramin-gamma (73 aa).

The 73-residue stretch at Glu1–Ala73 folds into the Disintegrin domain. 6 disulfides stabilise this stretch: Cys6–Cys21, Cys8–Cys16, Cys15–Cys38, Cys29–Cys35, Cys34–Cys59, and Cys47–Cys66. The Cell attachment site motif lies at Arg51–Asp53.

Belongs to the venom metalloproteinase (M12B) family. P-II subfamily. P-IIa sub-subfamily. As to quaternary structure, monomer (disintegrin). Expressed by the venom gland.

It localises to the secreted. Inhibits fibrinogen interaction with platelets. Acts by binding to alpha-IIb/beta-3 (ITGA2B/ITGB3) on the platelet surface and inhibits aggregation induced by ADP, thrombin, platelet-activating factor and collagen. The sequence is that of Disintegrin trigramin-gamma from Craspedocephalus gramineus (Bamboo pit viper).